The primary structure comprises 358 residues: MSTYNVAVLPGDGIGPEVMAEAIKVLDKVQAKFGFKLNFTQYLVGGAAIDAKGEPLPAETLQGCDNADAILFGSVGGPKWTHLPPDQQPERGALLPLRKHFKLFCNLRPATLYKGLEKFCPLRADIAAKGFDMVVVRELTGGIYFGQPKGRDGEGSDTRAFDTEVYYKYEIERIARAAFDAAMKRRKQVTSVDKANVLQSSILWRETVAEIAKEYPEVQVENMYIDNATMQLIKAPESFDVLLCSNIFGDIISDEAAMITGSMGMLPSASLNEEGFGLYEPAGGSAPDIAGKGIANPIAQILSAAMMLRYSFNLNEAATAIENAVQKVLADGHRTGDLADNSTPVSTAEMGTLIANAI.

Position 77–90 (77–90) interacts with NAD(+); it reads GPKWTHLPPDQQPE. The substrate site is built by Arg-98, Arg-108, Arg-137, and Asp-226. Residues Asp-226, Asp-250, and Asp-254 each contribute to the Mg(2+) site. An NAD(+)-binding site is contributed by 284 to 296; the sequence is GSAPDIAGKGIAN.

It belongs to the isocitrate and isopropylmalate dehydrogenases family. LeuB type 1 subfamily. Homodimer. Requires Mg(2+) as cofactor. Mn(2+) serves as cofactor.

It localises to the cytoplasm. The catalysed reaction is (2R,3S)-3-isopropylmalate + NAD(+) = 4-methyl-2-oxopentanoate + CO2 + NADH. The protein operates within amino-acid biosynthesis; L-leucine biosynthesis; L-leucine from 3-methyl-2-oxobutanoate: step 3/4. In terms of biological role, catalyzes the oxidation of 3-carboxy-2-hydroxy-4-methylpentanoate (3-isopropylmalate) to 3-carboxy-4-methyl-2-oxopentanoate. The product decarboxylates to 4-methyl-2 oxopentanoate. The sequence is that of 3-isopropylmalate dehydrogenase from Mannheimia succiniciproducens (strain KCTC 0769BP / MBEL55E).